The chain runs to 584 residues: Tricyclene synthase 1e20, chloroplastic (584 aa).

A chloroplast-targeting transit peptide spans Met1 to Asn45. Asn30, Asn209, and Asn322 each carry an N-linked (GlcNAc...) asparagine glycan. Mg(2+)-binding residues include Asp341 and Asp345. A DDXXD motif motif is present at residues Asp341–Asp345. N-linked (GlcNAc...) asparagine glycosylation is found at Asn387 and Asn468. The Mg(2+) site is built by Asn485, Ser489, and Glu493. N-linked (GlcNAc...) asparagine glycosylation occurs at Asn512.

This sequence belongs to the terpene synthase family. Tpsg subfamily. Mg(2+) serves as cofactor. Mn(2+) is required as a cofactor. In terms of tissue distribution, accumulates at low levels in flowers; mostly expressed in both upper and lower petal lobes, and, to a lower extent, in tube and stamens.

The protein localises to the plastid. It is found in the chloroplast stroma. The catalysed reaction is (2E)-geranyl diphosphate = tricyclene + diphosphate. It carries out the reaction (2E)-geranyl diphosphate = beta-myrcene + diphosphate. It participates in secondary metabolite biosynthesis; terpenoid biosynthesis. In terms of biological role, may contribute to floral scent emission. The protein is Tricyclene synthase 1e20, chloroplastic (1e20) of Antirrhinum majus (Garden snapdragon).